Consider the following 424-residue polypeptide: Putative fasciclin-like arabinogalactan protein 20 (424 aa).

Residues 46–66 (LLTTFFLIFFVLDIDLVATSM) form a helical membrane-spanning segment. Positions 56–194 (VLDIDLVATS…YVVIYGSDEF (139 aa)) constitute an FAS1 1 domain. 2 N-linked (GlcNAc...) asparagine glycosylation sites follow: Asn153 and Asn160. Over residues 199–226 (TKISDDSSSSSSIPSTTSSTGSIPIPSS) the composition is skewed to low complexity. A disordered region spans residues 199-246 (TKISDDSSSSSSIPSTTSSTGSIPIPSSATQTPPSPNIASDSTRNLPN). Polar residues predominate over residues 227 to 246 (ATQTPPSPNIASDSTRNLPN). N-linked (GlcNAc...) asparagine glycans are attached at residues Asn246, Asn283, and Asn287. Residues 250–384 (PVNRFNIFES…IAVHGFNQMI (135 aa)) enclose the FAS1 2 domain. Residues 405 to 424 (QEEEGVHGEYSSELGDYGLH) form a disordered region.

Belongs to the fasciclin-like AGP family.

Its subcellular location is the membrane. Its function is as follows. May be a cell surface adhesion protein. The protein is Putative fasciclin-like arabinogalactan protein 20 (FLA20) of Arabidopsis thaliana (Mouse-ear cress).